Reading from the N-terminus, the 200-residue chain is LHFPL tetraspan subfamily member 6 protein (200 aa).

A signal peptide spans 1–23 (MASSLTCTGVIWALLSFLSAATS). The next 3 helical transmembrane spans lie at 84–104 (ICTI…LTAL), 123–143 (GIQF…PLGW), and 166–186 (IGWA…LCTW).

The protein belongs to the LHFP family.

The protein localises to the membrane. The sequence is that of LHFPL tetraspan subfamily member 6 protein from Mus musculus (Mouse).